We begin with the raw amino-acid sequence, 264 residues long: Thiazole synthase (264 aa).

Residue lysine 98 is the Schiff-base intermediate with DXP of the active site. 1-deoxy-D-xylulose 5-phosphate-binding positions include glycine 159, 185–186 (AG), and 207–208 (AT).

It belongs to the ThiG family. As to quaternary structure, homotetramer. Forms heterodimers with either ThiH or ThiS.

The protein localises to the cytoplasm. The enzyme catalyses [ThiS sulfur-carrier protein]-C-terminal-Gly-aminoethanethioate + 2-iminoacetate + 1-deoxy-D-xylulose 5-phosphate = [ThiS sulfur-carrier protein]-C-terminal Gly-Gly + 2-[(2R,5Z)-2-carboxy-4-methylthiazol-5(2H)-ylidene]ethyl phosphate + 2 H2O + H(+). The protein operates within cofactor biosynthesis; thiamine diphosphate biosynthesis. Functionally, catalyzes the rearrangement of 1-deoxy-D-xylulose 5-phosphate (DXP) to produce the thiazole phosphate moiety of thiamine. Sulfur is provided by the thiocarboxylate moiety of the carrier protein ThiS. In vitro, sulfur can be provided by H(2)S. This is Thiazole synthase from Mycobacterium marinum (strain ATCC BAA-535 / M).